Here is a 538-residue protein sequence, read N- to C-terminus: Phosphoenolpyruvate carboxykinase (ATP) (538 aa).

3 residues coordinate substrate: Arg-61, Tyr-195, and Lys-201. ATP-binding positions include Lys-201, His-220, and 236-244 (GLSGTGKTT). Mn(2+) is bound by residues Lys-201 and His-220. Asp-257 contacts Mn(2+). Residues Glu-285, Arg-323, and Thr-449 each contribute to the ATP site. Arg-323 is a binding site for substrate.

The protein belongs to the phosphoenolpyruvate carboxykinase (ATP) family. Mn(2+) is required as a cofactor.

The protein localises to the cytoplasm. The catalysed reaction is oxaloacetate + ATP = phosphoenolpyruvate + ADP + CO2. It functions in the pathway carbohydrate biosynthesis; gluconeogenesis. Involved in the gluconeogenesis. Catalyzes the conversion of oxaloacetate (OAA) to phosphoenolpyruvate (PEP) through direct phosphoryl transfer between the nucleoside triphosphate and OAA. This chain is Phosphoenolpyruvate carboxykinase (ATP), found in Afipia carboxidovorans (strain ATCC 49405 / DSM 1227 / KCTC 32145 / OM5) (Oligotropha carboxidovorans).